Reading from the N-terminus, the 186-residue chain is Peptide deformylase 2 (186 aa).

2 residues coordinate Fe cation: cysteine 104 and histidine 146. Residue glutamate 147 is part of the active site. Histidine 150 contacts Fe cation.

Belongs to the polypeptide deformylase family. Fe(2+) serves as cofactor.

The enzyme catalyses N-terminal N-formyl-L-methionyl-[peptide] + H2O = N-terminal L-methionyl-[peptide] + formate. In terms of biological role, removes the formyl group from the N-terminal Met of newly synthesized proteins. Requires at least a dipeptide for an efficient rate of reaction. N-terminal L-methionine is a prerequisite for activity but the enzyme has broad specificity at other positions. In Streptomyces avermitilis (strain ATCC 31267 / DSM 46492 / JCM 5070 / NBRC 14893 / NCIMB 12804 / NRRL 8165 / MA-4680), this protein is Peptide deformylase 2.